The chain runs to 120 residues: Small ribosomal subunit protein uS13 (120 aa).

Residues 93 to 120 (RRGLPCRGQKTKTNARTRKGKRKTVGAA) are disordered.

It belongs to the universal ribosomal protein uS13 family. Part of the 30S ribosomal subunit. Forms a loose heterodimer with protein S19. Forms two bridges to the 50S subunit in the 70S ribosome.

Functionally, located at the top of the head of the 30S subunit, it contacts several helices of the 16S rRNA. In the 70S ribosome it contacts the 23S rRNA (bridge B1a) and protein L5 of the 50S subunit (bridge B1b), connecting the 2 subunits; these bridges are implicated in subunit movement. Contacts the tRNAs in the A and P-sites. The polypeptide is Small ribosomal subunit protein uS13 (Sulfurovum sp. (strain NBC37-1)).